We begin with the raw amino-acid sequence, 158 residues long: MFRPLVKRVVTRRFLAAANNSNAHIEIRTLEDLAKLQSLDNVDPKLISKLINDKTNELNIKNELQMLKQLQAEEQKTQETSLKKFVRPAWIFLLMGSIVYLSCHYVWWKLDYEEKELEYTHKVHQLESELAALNEAHNSSVSSDKNSKRSSRKWYKFW.

The N-terminal 15 residues, 1 to 15 (MFRPLVKRVVTRRFL), are a transit peptide targeting the mitochondrion. At 16 to 85 (AAANNSNAHI…KTQETSLKKF (70 aa)) the chain is on the mitochondrial matrix side. Residues 86–108 (VRPAWIFLLMGSIVYLSCHYVWW) form a helical membrane-spanning segment. The Mitochondrial intermembrane portion of the chain corresponds to 109–158 (KLDYEEKELEYTHKVHQLESELAALNEAHNSSVSSDKNSKRSSRKWYKFW). The stretch at 110-140 (LDYEEKELEYTHKVHQLESELAALNEAHNSS) forms a coiled coil.

This sequence belongs to the INA17 family. As to quaternary structure, component of the inner membrane assembly (INA) complex, composed of INA17 and INA22. Interacts with a subset of F(1)F(0)-ATP synthase subunits of the F(1)-domain and the peripheral stalk.

It is found in the mitochondrion inner membrane. Functionally, component of the INA complex (INAC) that promotes the biogenesis of mitochondrial F(1)F(0)-ATP synthase. INAC facilitates the assembly of the peripheral stalk and promotes the assembly of the catalytic F(1)-domain with the membrane-embedded F(0)-domain. The chain is Inner membrane assembly complex subunit 17 from Kluyveromyces lactis (strain ATCC 8585 / CBS 2359 / DSM 70799 / NBRC 1267 / NRRL Y-1140 / WM37) (Yeast).